The sequence spans 534 residues: C-type lectin domain family 18 member A (534 aa).

The interval 47 to 88 (GALPVAGKPEPMARSLASAPVSPWHHMDRGSTTPAKARSHSA) is disordered. The SCP domain occupies 139–270 (LTAHNRLRSR…EAMEAFVCAY (132 aa)). The EGF-like domain maps to 316–349 (PRNPCRMSCRNLGHLNISTCRCHCQPGYTGRYCQ). 4 disulfides stabilise this stretch: C324–C337, C339–C348, C415–C520, and C496–C512. Residues 394 to 521 (IDGDCFMVSP…CKTRNRYICQ (128 aa)) form the C-type lectin domain.

Its subcellular location is the secreted. The protein is C-type lectin domain family 18 member A (Clec18a) of Mus musculus (Mouse).